A 474-amino-acid polypeptide reads, in one-letter code: Trehalose-6-phosphate synthase (474 aa).

Position 10 (Arg10) interacts with D-glucose 6-phosphate. Residue 22-23 (GG) coordinates UDP-alpha-D-glucose. Tyr77 and Asp131 together coordinate D-glucose 6-phosphate. The UDP-alpha-D-glucose site is built by Arg263 and Lys268. Arg301 is a binding site for D-glucose 6-phosphate. UDP-alpha-D-glucose contacts are provided by residues Phe340 and 366–370 (LVAKE).

This sequence belongs to the glycosyltransferase 20 family. In terms of assembly, homotetramer.

The enzyme catalyses D-glucose 6-phosphate + UDP-alpha-D-glucose = alpha,alpha-trehalose 6-phosphate + UDP + H(+). It functions in the pathway glycan biosynthesis; trehalose biosynthesis. In terms of biological role, probably involved in the osmoprotection via the biosynthesis of trehalose. Catalyzes the transfer of glucose from UDP-alpha-D-glucose (UDP-Glc) to D-glucose 6-phosphate (Glc-6-P) to form trehalose-6-phosphate. Acts with retention of the anomeric configuration of the UDP-sugar donor. The chain is Trehalose-6-phosphate synthase from Escherichia coli O6:K15:H31 (strain 536 / UPEC).